Here is a 180-residue protein sequence, read N- to C-terminus: Oligoribonuclease (180 aa).

Positions 7 to 170 constitute an Exonuclease domain; sequence LIWIDLEMTG…DDIRESIAEL (164 aa). The active site involves Tyr128.

Belongs to the oligoribonuclease family.

It localises to the cytoplasm. In terms of biological role, 3'-to-5' exoribonuclease specific for small oligoribonucleotides. The polypeptide is Oligoribonuclease (Ectopseudomonas mendocina (strain ymp) (Pseudomonas mendocina)).